The primary structure comprises 312 residues: DNA-directed RNA polymerase subunit alpha (312 aa).

Residues 1–226 form an alpha N-terminal domain (alpha-NTD) region; it reads MIEFEKPIIT…EHLNLFTDLT (226 aa). Residues 243 to 312 form an alpha C-terminal domain (alpha-CTD) region; that stretch reads DEKVLDRTIE…DLGLGLKNDK (70 aa).

This sequence belongs to the RNA polymerase alpha chain family. In terms of assembly, homodimer. The RNAP catalytic core consists of 2 alpha, 1 beta, 1 beta' and 1 omega subunit. When a sigma factor is associated with the core the holoenzyme is formed, which can initiate transcription.

The catalysed reaction is RNA(n) + a ribonucleoside 5'-triphosphate = RNA(n+1) + diphosphate. Its function is as follows. DNA-dependent RNA polymerase catalyzes the transcription of DNA into RNA using the four ribonucleoside triphosphates as substrates. The chain is DNA-directed RNA polymerase subunit alpha from Streptococcus agalactiae serotype III (strain NEM316).